Here is a 699-residue protein sequence, read N- to C-terminus: Auxin response factor 1 (699 aa).

Residues 122 to 224 constitute a DNA-binding region (TF-B3); it reads FCKILTPSDT…EQRVGVRRLV (103 aa). Disordered regions lie at residues 539-565 and 680-699; these read TTTD…DSGQ and EPHP…KTGF. Residues 595-684 form the PB1 domain; that stretch reads RTRIKVQMHG…DEKKIEPHPK (90 aa). The span at 687-699 shows a compositional bias: polar residues; the sequence is SSANPEQDQKTGF.

The protein belongs to the ARF family. Homodimers and heterodimers. In terms of tissue distribution, expressed in roots, culms, leaves and young panicles.

The protein resides in the nucleus. Its function is as follows. Auxin response factors (ARFs) are transcriptional factors that bind specifically to the DNA sequence 5'-TGTCTC-3' found in the auxin-responsive promoter elements (AuxREs). The polypeptide is Auxin response factor 1 (ARF1) (Oryza sativa subsp. japonica (Rice)).